Reading from the N-terminus, the 240-residue chain is Cysteine-rich venom protein triflin (240 aa).

The first 19 residues, 1–19 (MIAFIVLPILAAVLQQSSG), serve as a signal peptide directing secretion. The SCP domain maps to 39–166 (DLHNSLRRSV…KYSYFYVCQY (128 aa)). 8 cysteine pairs are disulfide-bonded: cysteine 75-cysteine 153, cysteine 92-cysteine 167, cysteine 148-cysteine 164, cysteine 186-cysteine 193, cysteine 189-cysteine 198, cysteine 202-cysteine 235, cysteine 211-cysteine 229, and cysteine 220-cysteine 233. One can recognise a ShKT domain in the interval 202 to 235 (CTRENEFTNCDSLVQKSSCQDNYMKSKCPASCFC).

Belongs to the CRISP family. Forms a stable, non-covalent complex with SSP-2. In terms of tissue distribution, expressed by the venom gland.

The protein localises to the secreted. Functionally, blocks contraction of smooth muscle elicited by high potassium-induced depolarization. May target voltage-gated calcium channels (Cav) on smooth muscle. The chain is Cysteine-rich venom protein triflin from Protobothrops flavoviridis (Habu).